The chain runs to 460 residues: tRNA(Ile)-lysidine synthase (460 aa).

30–35 is a binding site for ATP; it reads SGGLDS.

Belongs to the tRNA(Ile)-lysidine synthase family.

Its subcellular location is the cytoplasm. The catalysed reaction is cytidine(34) in tRNA(Ile2) + L-lysine + ATP = lysidine(34) in tRNA(Ile2) + AMP + diphosphate + H(+). In terms of biological role, ligates lysine onto the cytidine present at position 34 of the AUA codon-specific tRNA(Ile) that contains the anticodon CAU, in an ATP-dependent manner. Cytidine is converted to lysidine, thus changing the amino acid specificity of the tRNA from methionine to isoleucine. This is tRNA(Ile)-lysidine synthase from Yersinia pseudotuberculosis serotype I (strain IP32953).